The primary structure comprises 530 residues: Laccase-2 (530 aa).

The N-terminal stretch at 1 to 23 is a signal peptide; sequence MLLSSAFVGSCLAILNFAAAVSA. Plastocyanin-like domains follow at residues 36–154 and 167–311; these read NKVI…YDPE and TTII…RYTN. An N-linked (GlcNAc...) asparagine glycan is attached at asparagine 82. Residues histidine 88 and histidine 90 each coordinate Cu cation. Cystine bridges form between cysteine 109/cysteine 520 and cysteine 141/cysteine 228. N-linked (GlcNAc...) asparagine glycosylation is present at asparagine 120. Positions 133 and 135 each coordinate Cu cation. 8 N-linked (GlcNAc...) asparagine glycosylation sites follow: asparagine 191, asparagine 240, asparagine 292, asparagine 311, asparagine 366, asparagine 375, asparagine 392, and asparagine 412. Residues 379–504 form the Plastocyanin-like 3 domain; sequence YVNPTVPVLL…FAVVLAEAPQ (126 aa). Histidine 428, histidine 431, histidine 433, histidine 484, cysteine 485, histidine 486, and histidine 490 together coordinate Cu cation.

It belongs to the multicopper oxidase family. Requires Cu cation as cofactor.

It is found in the secreted. It catalyses the reaction 4 hydroquinone + O2 = 4 benzosemiquinone + 2 H2O. Inhibited by chloride ions. Inhibited by citrate. Inhibited by oxalate. Activated by acetate. In vitro, has activity towards 2,2'-azino-bis(3-ethylbenzthiazoline-6-sulfonic acid) (ABTS), 2,6-dimethoxy-phenol, and guaiacol. Although brown rot fungi preferentially degrade hemicellulose and cellulose, the enzyme may contribute to generating small amounts of lignin breakdown products required for catalytic reactions. This is Laccase-2 from Fomitopsis schrenkii (Brown rot fungus).